The following is a 182-amino-acid chain: pEARLI1-like lipid transfer protein 2 (182 aa).

Positions 1–25 (MASKNSASLALFFALNILFFTLTAG) are cleaved as a signal peptide. Pro residues predominate over residues 33–92 (SPKPRPLPNPKVPSPKVPTPSVPSPYVPTPSVPSPSVPTPSVPSPSVPSPNPTPVIPPRT). Residues 33–94 (SPKPRPLPNP…TPVIPPRTPG (62 aa)) are disordered. 7 consecutive repeat copies span residues 42-46 (PKVPS), 47-51 (PKVPT), 52-56 (PSVPS), 62-66 (PSVPS), 67-71 (PSVPT), 72-76 (PSVPS), and 77-81 (PSVPS). Positions 42 to 81 (PKVPSPKVPTPSVPSPYVPTPSVPSPSVPTPSVPSPSVPS) are 7 X 5 AA repeats of P-[KS]-V-P-[ST].

This sequence belongs to the plant LTP family. PEARLI1 subfamily.

It localises to the secreted. The protein localises to the cell wall. Probable lipid transfer protein (LTP). May improve freezing survival. Seems to control the flowering process and lignin synthesis. Confers resistance to Botrytis cinerea. The sequence is that of pEARLI1-like lipid transfer protein 2 from Arabidopsis thaliana (Mouse-ear cress).